We begin with the raw amino-acid sequence, 294 residues long: Pyridoxal 5'-phosphate synthase subunit PdxS (294 aa).

A D-ribose 5-phosphate-binding site is contributed by Asp-24. The active-site Schiff-base intermediate with D-ribose 5-phosphate is Lys-81. Residue Gly-153 coordinates D-ribose 5-phosphate. D-glyceraldehyde 3-phosphate is bound at residue Arg-165. D-ribose 5-phosphate contacts are provided by residues Gly-214 and Gly-235–Ser-236.

This sequence belongs to the PdxS/SNZ family. In the presence of PdxT, forms a dodecamer of heterodimers.

It catalyses the reaction aldehydo-D-ribose 5-phosphate + D-glyceraldehyde 3-phosphate + L-glutamine = pyridoxal 5'-phosphate + L-glutamate + phosphate + 3 H2O + H(+). Its pathway is cofactor biosynthesis; pyridoxal 5'-phosphate biosynthesis. Its function is as follows. Catalyzes the formation of pyridoxal 5'-phosphate from ribose 5-phosphate (RBP), glyceraldehyde 3-phosphate (G3P) and ammonia. The ammonia is provided by the PdxT subunit. Can also use ribulose 5-phosphate and dihydroxyacetone phosphate as substrates, resulting from enzyme-catalyzed isomerization of RBP and G3P, respectively. This Anoxybacillus flavithermus (strain DSM 21510 / WK1) protein is Pyridoxal 5'-phosphate synthase subunit PdxS.